The primary structure comprises 273 residues: Shikimate dehydrogenase (NADP(+)) (273 aa).

Shikimate contacts are provided by residues 15 to 17 (SLS) and T62. Catalysis depends on K66, which acts as the Proton acceptor. An NADP(+)-binding site is contributed by E78. Shikimate-binding residues include N87 and D102. NADP(+) contacts are provided by residues 126–130 (GAGGA), 150–155 (NRTIEK), and I217. Residue Y219 participates in shikimate binding. G240 lines the NADP(+) pocket.

It belongs to the shikimate dehydrogenase family. In terms of assembly, homodimer.

It carries out the reaction shikimate + NADP(+) = 3-dehydroshikimate + NADPH + H(+). The protein operates within metabolic intermediate biosynthesis; chorismate biosynthesis; chorismate from D-erythrose 4-phosphate and phosphoenolpyruvate: step 4/7. In terms of biological role, involved in the biosynthesis of the chorismate, which leads to the biosynthesis of aromatic amino acids. Catalyzes the reversible NADPH linked reduction of 3-dehydroshikimate (DHSA) to yield shikimate (SA). The sequence is that of Shikimate dehydrogenase (NADP(+)) from Nitrosopumilus maritimus (strain SCM1).